A 284-amino-acid polypeptide reads, in one-letter code: 4-hydroxy-3-methylbut-2-enyl diphosphate reductase (284 aa).

A [4Fe-4S] cluster-binding site is contributed by Cys12. His40 and His72 together coordinate (2E)-4-hydroxy-3-methylbut-2-enyl diphosphate. Dimethylallyl diphosphate contacts are provided by His40 and His72. His40 and His72 together coordinate isopentenyl diphosphate. Residue Cys94 participates in [4Fe-4S] cluster binding. His122 serves as a coordination point for (2E)-4-hydroxy-3-methylbut-2-enyl diphosphate. His122 contributes to the dimethylallyl diphosphate binding site. His122 contributes to the isopentenyl diphosphate binding site. The active-site Proton donor is Glu124. Residue Thr161 participates in (2E)-4-hydroxy-3-methylbut-2-enyl diphosphate binding. Cys193 is a [4Fe-4S] cluster binding site. The (2E)-4-hydroxy-3-methylbut-2-enyl diphosphate site is built by Ser221, Asn223, and Ser264. Residues Ser221, Asn223, and Ser264 each contribute to the dimethylallyl diphosphate site. Isopentenyl diphosphate is bound by residues Ser221, Asn223, and Ser264.

It belongs to the IspH family. [4Fe-4S] cluster serves as cofactor.

It carries out the reaction isopentenyl diphosphate + 2 oxidized [2Fe-2S]-[ferredoxin] + H2O = (2E)-4-hydroxy-3-methylbut-2-enyl diphosphate + 2 reduced [2Fe-2S]-[ferredoxin] + 2 H(+). The enzyme catalyses dimethylallyl diphosphate + 2 oxidized [2Fe-2S]-[ferredoxin] + H2O = (2E)-4-hydroxy-3-methylbut-2-enyl diphosphate + 2 reduced [2Fe-2S]-[ferredoxin] + 2 H(+). Its pathway is isoprenoid biosynthesis; dimethylallyl diphosphate biosynthesis; dimethylallyl diphosphate from (2E)-4-hydroxy-3-methylbutenyl diphosphate: step 1/1. The protein operates within isoprenoid biosynthesis; isopentenyl diphosphate biosynthesis via DXP pathway; isopentenyl diphosphate from 1-deoxy-D-xylulose 5-phosphate: step 6/6. Functionally, catalyzes the conversion of 1-hydroxy-2-methyl-2-(E)-butenyl 4-diphosphate (HMBPP) into a mixture of isopentenyl diphosphate (IPP) and dimethylallyl diphosphate (DMAPP). Acts in the terminal step of the DOXP/MEP pathway for isoprenoid precursor biosynthesis. The protein is 4-hydroxy-3-methylbut-2-enyl diphosphate reductase of Dehalococcoides mccartyi (strain ATCC BAA-2100 / JCM 16839 / KCTC 5957 / BAV1).